The sequence spans 217 residues: U exon protein (217 aa).

2 disordered regions span residues 79 to 113 (ISGE…GGRV) and 171 to 217 (KEAP…WQRR). Basic residues predominate over residues 188–197 (RGQRGRKRRC). Residues 202-217 (GGFQQPTGANQAWQRR) are compositionally biased toward polar residues.

This sequence belongs to the adenoviridae U exon protein family.

The protein localises to the host nucleus. Its subcellular location is the host nucleoplasm. The protein resides in the host nucleolus. Might play a role in viral replication since it is associated with viral replication centers. Seems to have an effect on DBP localization. This is U exon protein from Human adenovirus C serotype 5 (HAdV-5).